The sequence spans 507 residues: MTEAATQLPISLNILVDSIREAANSTLDETLRSKLGQFMSSSAVSELMANLFESYVGEHEILDAGAGVGSLTAAFVQNATLNGAKSISSTCYEISEVMVYNLIQVLDLCKIRAMEFEVNWQQKIIESDFIQASVEQLLIENYSPKYNKAILNPPYLKIAAKGRERALLQKVGIEASNLYSAFVALAIKQLKSGGELVAITPRSFCNGPYFNDFRKQMLDECSLNKIHVFNSRKSAFKADNVLQENIIYHLTKGETQRKVVTVYSSTCANDINPTIFEVPFDEIVKSNNPDLFIHIVTNEQERELANKAGGLPCSLSDLGIQVSTGKVVDFRTRENLSMEYISNSVPLIFPQHLQRCSIVWPITKAKKPNALIVNEATNNLMVPNGIYVLTRRLTAKEEKRRIVASIYYPDIANVDTVGFDNKINYFHANGKPLDISLAKGLWVFLNSTLIDKYFRQMNGHTQVNATDLRALRYPTREQLEDIANQVDFGEFEQTKIDEIINQSLQLM.

The protein belongs to the N(4)/N(6)-methyltransferase family. Monomer.

The enzyme catalyses a 2'-deoxyadenosine in DNA + S-adenosyl-L-methionine = an N(6)-methyl-2'-deoxyadenosine in DNA + S-adenosyl-L-homocysteine + H(+). In terms of biological role, a gamma subtype methylase that recognizes the double-stranded sequence 5'-CTGCAG-3', methylates A-5 on both strands, and protects the DNA from cleavage by the PstI endonuclease. The protein is Type II methyltransferase M.PstI (pstIM) of Providencia stuartii.